Consider the following 193-residue polypeptide: DNA damage-inducible transcript 4-like protein (193 aa).

This sequence belongs to the DDIT4 family.

The protein localises to the cytoplasm. Its function is as follows. Inhibits cell growth by regulating the TOR signaling pathway upstream of the TSC1-TSC2 complex and downstream of AKT1. This chain is DNA damage-inducible transcript 4-like protein (Ddit4l), found in Mus musculus (Mouse).